The sequence spans 87 residues: Small ribosomal subunit protein uS12m (87 aa).

This sequence belongs to the universal ribosomal protein uS12 family.

The protein localises to the mitochondrion matrix. It localises to the kinetoplast. Functionally, protein S12 is involved in the translation initiation step. The polypeptide is Small ribosomal subunit protein uS12m (RPS12) (Trypanoplasma borreli).